The chain runs to 79 residues: Sperm-specific basic nuclear protein SP4 (79 aa).

Positions 1-79 (MSKVSGGSRR…ARDYGSDYRS (79 aa)) are disordered. Over residues 9–60 (RRTRARRPMSNRRGRRSQSAAHRSRAQRRRRRTGTTRRARTSTARRARTRTA) the composition is skewed to basic residues. 2 repeats span residues 45–52 (RRARTSTA) and 53–60 (RRARTRTA). Basic and acidic residues predominate over residues 61–79 (RRSDLTRMMARDYGSDYRS).

It localises to the nucleus. The polypeptide is Sperm-specific basic nuclear protein SP4 (sp4-a) (Xenopus laevis (African clawed frog)).